Here is a 473-residue protein sequence, read N- to C-terminus: H(+)/Cl(-) exchange transporter ClcA (473 aa).

Residues 1–32 (MKTDTPSLETPQAARLRRRQLIRQLLERDKTP) are Cytoplasmic-facing. The chain crosses the membrane as a helical span at residues 33 to 69 (LAILFMAAVVGTLVGLAAVAFDKGVAWLQNQRMGALV). The Periplasmic portion of the chain corresponds to 70 to 76 (HTADNYP). A helical transmembrane segment spans residues 77–100 (LLLTVAFLCSAVLAMFGYFLVRKY). The short motif at 106-110 (GSGIP) is the Selectivity filter part_1 element. Serine 107 lines the chloride pocket. Positions 109-116 (IPEIEGAL) form an intramembrane region, helical. The Cytoplasmic segment spans residues 117–123 (EDQRPVR). A run of 2 helical transmembrane segments spans residues 124–141 (WWRV…TLGG) and 148–166 (EGPT…LDVF). The short motif at 146 to 150 (GREGP) is the Selectivity filter part_2 element. The Cytoplasmic segment spans residues 167-176 (RLKGDEARHT). Intramembrane regions (helical) lie at residues 177–189 (LLAT…LAAA) and 193–201 (PLAGILFII). The Cytoplasmic portion of the chain corresponds to 202–214 (EEMRPQFRYTLIS). The helical transmembrane segment at 215–232 (IKAVFIGVIMSTIMYRIF) threads the bilayer. The Periplasmic portion of the chain corresponds to 233–252 (NHEVALIDVGKLSDAPLNTL). A helical membrane pass occupies residues 253–281 (WLYLILGIIFGIFGPIFNKWVLGMQDLLH). At 282-287 (RVHGGN) the chain is on the cytoplasmic side. Residues 288-309 (ITKWVLMGGAIGGLCGLLGFVA) traverse the membrane as a helical segment. Residues 310–329 (PATSGGGFNLIPIATAGNFS) are Periplasmic-facing. The next 2 membrane-spanning stretches (helical) occupy residues 330–349 (MGML…LCFS) and 355–376 (GIFA…MVAV). The short motif at 355 to 359 (GIFAP) is the Selectivity filter part_3 element. Isoleucine 356 and phenylalanine 357 together coordinate chloride. Residues 377-386 (ELFPQYHLEA) lie on the Periplasmic side of the membrane. An intramembrane region (helical) is located at residues 387–401 (GTFAIAGMGALLAAS). Residues 402-404 (IRA) constitute an intramembrane region (note=Loop between two helices). The segment at residues 405–416 (PLTGIILVLEMT) is an intramembrane region (helical). The segment at residues 417 to 421 (DNYQL) is an intramembrane region (note=Loop between two helices). A helical transmembrane segment spans residues 422–438 (ILPMIITGLGATLLAQF). Residues 439 to 473 (TGGKPLYSAILARTLAKQEAEQLARSKAASASENT) are Cytoplasmic-facing. Tyrosine 445 contacts chloride.

It belongs to the chloride channel (TC 2.A.49) family. ClcA subfamily. Homodimer.

It is found in the cell inner membrane. It carries out the reaction 2 chloride(in) + H(+)(out) = 2 chloride(out) + H(+)(in). Functionally, proton-coupled chloride transporter. Functions as antiport system and exchanges two chloride ions for 1 proton. Probably acts as an electrical shunt for an outwardly-directed proton pump that is linked to amino acid decarboxylation, as part of the extreme acid resistance (XAR) response. The sequence is that of H(+)/Cl(-) exchange transporter ClcA from Escherichia coli O157:H7.